A 407-amino-acid chain; its full sequence is V-set and immunoglobulin domain-containing protein 1 (407 aa).

Positions 1–22 (MMVFAFWKVFLILNCLAGQVSM) are cleaved as a signal peptide. Residues 23–134 (VQVTIPDTFV…HFVGKNQGLL (112 aa)) form the Ig-like V-type domain. The Extracellular segment spans residues 23–234 (VQVTIPDTFV…EIDLTSSHPE (212 aa)). The N-linked (GlcNAc...) asparagine glycan is linked to Asn-39. 2 disulfides stabilise this stretch: Cys-44/Cys-118 and Cys-163/Cys-213. The Ig-like C2-type domain maps to 145–229 (PFCTIQGRPE…GNSSCEIDLT (85 aa)). 2 N-linked (GlcNAc...) asparagine glycosylation sites follow: Asn-202 and Asn-221. Residues 235-255 (VGIIIGALVGALIGAAVIICV) form a helical membrane-spanning segment. Residues 256 to 407 (VYFARNKVKS…SKAGEDTVKA (152 aa)) are Cytoplasmic-facing. 2 disordered regions span residues 268–289 (QKNLNSSTELEPMTKVHHPQQS) and 318–407 (TAVL…TVKA). A phosphoserine mark is found at Ser-273 and Ser-274. Residues 361–371 (DPETETEPEPE) are compositionally biased toward acidic residues.

It is found in the membrane. This is V-set and immunoglobulin domain-containing protein 1 (Vsig1) from Mus musculus (Mouse).